We begin with the raw amino-acid sequence, 105 residues long: Putative regulatory protein COPRO5265_1186 (105 aa).

The segment at 76-105 (RLEEEEEEEERTEPITEQEAELEEESGEDV) is disordered. Acidic residues predominate over residues 78-105 (EEEEEEEERTEPITEQEAELEEESGEDV).

This sequence belongs to the RemA family.

The polypeptide is Putative regulatory protein COPRO5265_1186 (Coprothermobacter proteolyticus (strain ATCC 35245 / DSM 5265 / OCM 4 / BT)).